Here is a 331-residue protein sequence, read N- to C-terminus: Ketol-acid reductoisomerase (NADP(+)) (331 aa).

The KARI N-terminal Rossmann domain occupies A2–T182. NADP(+) contacts are provided by residues Y25–Q28, S51, S53, and D83–Q86. H108 is an active-site residue. Residue G134 participates in NADP(+) binding. Positions N183–L328 constitute a KARI C-terminal knotted domain. Mg(2+) is bound by residues D191, E195, E227, and E231. S252 is a binding site for substrate.

The protein belongs to the ketol-acid reductoisomerase family. Mg(2+) is required as a cofactor.

It catalyses the reaction (2R)-2,3-dihydroxy-3-methylbutanoate + NADP(+) = (2S)-2-acetolactate + NADPH + H(+). The catalysed reaction is (2R,3R)-2,3-dihydroxy-3-methylpentanoate + NADP(+) = (S)-2-ethyl-2-hydroxy-3-oxobutanoate + NADPH + H(+). Its pathway is amino-acid biosynthesis; L-isoleucine biosynthesis; L-isoleucine from 2-oxobutanoate: step 2/4. It participates in amino-acid biosynthesis; L-valine biosynthesis; L-valine from pyruvate: step 2/4. Functionally, involved in the biosynthesis of branched-chain amino acids (BCAA). Catalyzes an alkyl-migration followed by a ketol-acid reduction of (S)-2-acetolactate (S2AL) to yield (R)-2,3-dihydroxy-isovalerate. In the isomerase reaction, S2AL is rearranged via a Mg-dependent methyl migration to produce 3-hydroxy-3-methyl-2-ketobutyrate (HMKB). In the reductase reaction, this 2-ketoacid undergoes a metal-dependent reduction by NADPH to yield (R)-2,3-dihydroxy-isovalerate. This is Ketol-acid reductoisomerase (NADP(+)) from Prochlorococcus marinus (strain NATL2A).